We begin with the raw amino-acid sequence, 297 residues long: 3-mercaptopyruvate sulfurtransferase (297 aa).

N-acetylalanine is present on alanine 2. The 120-residue stretch at 25 to 144 (ASQPLKLLDA…WLSQNLPISS (120 aa)) folds into the Rhodanese 1 domain. Serine 35 bears the Phosphoserine mark. Lysine 40 is modified (N6-acetyllysine; alternate). An N6-succinyllysine; alternate modification is found at lysine 40. Residues 145 to 160 (GKSPSEPAEFCAQLDP) form a hinge region. Lysine 146 and lysine 164 each carry N6-succinyllysine. One can recognise a Rhodanese 2 domain in the interval 174 to 288 (DARRFQVVDA…WYMRAQPEHV (115 aa)). Arginine 188 contacts substrate. Cysteine 248 functions as the Cysteine persulfide intermediate in the catalytic mechanism.

In terms of assembly, monomer (active form). Homodimer; disulfide-linked (inactive form). In terms of processing, the N-terminus is blocked. In terms of tissue distribution, expressed in liver, heart, kidney and brain. Localizes to tubular epithelium in the kidney, pericentral hepatocytes in the liver, cardiac cells in the heart and neuroglial cells in the brain. Also expressed in vascular endothelium of the thoracic aorta. Weak expression in lung and thymus.

The protein localises to the cytoplasm. The protein resides in the mitochondrion. It is found in the synapse. Its subcellular location is the synaptosome. It catalyses the reaction 2-oxo-3-sulfanylpropanoate + [thioredoxin]-dithiol = [thioredoxin]-disulfide + hydrogen sulfide + pyruvate + H(+). With respect to regulation, by oxidative stress, and thioredoxin. Under oxidative stress conditions, the catalytic cysteine site is converted to a sulfenate which inhibits the MPST enzyme activity. Reduced thioredoxin cleaves an intersubunit disulfide bond to turn on the redox switch and reactivate the enzyme. Inhibited by different oxidants, hydrogen peroxide and tetrathionate. Transfer of a sulfur ion to cyanide or to other thiol compounds. Also has weak rhodanese activity. Detoxifies cyanide and is required for thiosulfate biosynthesis. Acts as an antioxidant. In combination with cysteine aminotransferase (CAT), contributes to the catabolism of cysteine and is an important producer of hydrogen sulfide in the brain, retina and vascular endothelial cells. Hydrogen sulfide H(2)S is an important synaptic modulator, signaling molecule, smooth muscle contractor and neuroprotectant. Its production by the 3MST/CAT pathway is regulated by calcium ions. The polypeptide is 3-mercaptopyruvate sulfurtransferase (Mpst) (Rattus norvegicus (Rat)).